The sequence spans 88 residues: MERINTRKALVGSVVSSVNDKTIIVAVDIYKKHPIYSKRFKKTKRFAAHDEQNKAKIGDIVKIIETRPISKTKKFRLDKIIELAKEGN.

The protein belongs to the universal ribosomal protein uS17 family. Part of the 30S ribosomal subunit.

Functionally, one of the primary rRNA binding proteins, it binds specifically to the 5'-end of 16S ribosomal RNA. The chain is Small ribosomal subunit protein uS17 from Mycoplasmopsis pulmonis (strain UAB CTIP) (Mycoplasma pulmonis).